The chain runs to 120 residues: Large ribosomal subunit protein bL19 (120 aa).

It belongs to the bacterial ribosomal protein bL19 family.

This protein is located at the 30S-50S ribosomal subunit interface and may play a role in the structure and function of the aminoacyl-tRNA binding site. This chain is Large ribosomal subunit protein bL19, found in Crocosphaera subtropica (strain ATCC 51142 / BH68) (Cyanothece sp. (strain ATCC 51142)).